The primary structure comprises 219 residues: ATP phosphoribosyltransferase (219 aa).

This sequence belongs to the ATP phosphoribosyltransferase family. Short subfamily. Heteromultimer composed of HisG and HisZ subunits.

It is found in the cytoplasm. It carries out the reaction 1-(5-phospho-beta-D-ribosyl)-ATP + diphosphate = 5-phospho-alpha-D-ribose 1-diphosphate + ATP. Its pathway is amino-acid biosynthesis; L-histidine biosynthesis; L-histidine from 5-phospho-alpha-D-ribose 1-diphosphate: step 1/9. Its function is as follows. Catalyzes the condensation of ATP and 5-phosphoribose 1-diphosphate to form N'-(5'-phosphoribosyl)-ATP (PR-ATP). Has a crucial role in the pathway because the rate of histidine biosynthesis seems to be controlled primarily by regulation of HisG enzymatic activity. The sequence is that of ATP phosphoribosyltransferase from Clostridium kluyveri (strain NBRC 12016).